The sequence spans 197 residues: Transmembrane protein 126A (197 aa).

The Mitochondrial matrix segment spans residues 1-35 (MENHEPDGTIIKENLTDIIARKINQLPEAERNLLE). The chain crosses the membrane as a helical span at residues 36–56 (NGSTYVGLNAALCGLIANSLF). Over 57 to 58 (RR) the chain is Mitochondrial intermembrane. Residues 59–79 (ILHVTQARIAAGLPMAVIPFL) traverse the membrane as a helical segment. Residues 80–107 (TANVSYKGFVSLPLNTGDLQCETCTVTR) are Mitochondrial matrix-facing. A helical membrane pass occupies residues 108–128 (GGLVGLVFGGLYPVFLAIPVN). Topologically, residues 129–160 (GGLAARYNSALLPEKGNILNYWIRISKPVFRK) are mitochondrial intermembrane. Residues 161–177 (MLFPILLQTGFAAYLGS) traverse the membrane as a helical segment. Over 178–197 (RQYKLLIKALQLPEPGLEIE) the chain is Mitochondrial matrix.

Belongs to the TMEM126 family. Interacts with OXA1L; promoting cotranslational quality control in mitochondria.

Its subcellular location is the mitochondrion inner membrane. Protein required for the cotranslational protein quality control in the inner membrane of the mitochondria. Associates with newly synthesized polypeptides and may act as a chaperone that cooperates with OXA1L for the insertion of newly synthesized mitochondrial proteins into the inner membrane. Required for the assembly of the ND4 module of mitochondrial complex I. This chain is Transmembrane protein 126A (TMEM126A), found in Bos taurus (Bovine).